A 707-amino-acid polypeptide reads, in one-letter code: Polyribonucleotide nucleotidyltransferase (707 aa).

The Mg(2+) site is built by Asp-488 and Asp-494. The region spanning 554 to 613 (PRLFTMKINQDKIREVIGKGGETIRSITAETGTEINIAEDGTITIAATTQEAGDAAKKRI) is the KH domain. Positions 623 to 693 (GKVYEGTVVK…DRGRVRLSIK (71 aa)) constitute an S1 motif domain.

Belongs to the polyribonucleotide nucleotidyltransferase family. Mg(2+) is required as a cofactor.

It localises to the cytoplasm. The catalysed reaction is RNA(n+1) + phosphate = RNA(n) + a ribonucleoside 5'-diphosphate. Functionally, involved in mRNA degradation. Catalyzes the phosphorolysis of single-stranded polyribonucleotides processively in the 3'- to 5'-direction. The polypeptide is Polyribonucleotide nucleotidyltransferase (Neisseria meningitidis serogroup B (strain ATCC BAA-335 / MC58)).